The chain runs to 452 residues: MSWDEMYRDAYERVLNSIGKIKGVMLAYNTNIDAIKYLKREDLERRIEEAGKDEVLRYSDELPKKINTIQQLLGSILWSVKRGKAAELLVEDREVRNYMRQWGWDELRMGGQVGIMANLLGGVYGIPVIAHVPQISKLQASLFLDGPIYVPTFEEGLKLVHPRNFEGNEEDCIHYIYEFPRGFKVLNFTAPRENRFIGAADDYNPRLYIRKEWVERFEEIAERAELAIVSGLHSLTEETYREPIKVVREHLKVLKDLNIKTHLEFAFTADEKVRREILGLLSLVYSVGLNEVELASVLEIMNERELADRILAKDPADPVAVIEGLMKLIEEGVERIHFHTYGYYLAITKYRGEHVRDALLFSALAAATKAMLGNIEKLDDLRKGLEVPIGRQGLEVYEVVKREFNVEKGIGEVGDYQIAFVPTKIVEKPKSTVGIGDTISSSAFVSEFSLSS.

An ADPK domain is found at 1–452 (MSWDEMYRDA…AFVSEFSLSS (452 aa)). D-glucose contacts are provided by residues Asp-33, Glu-87, 111 to 112 (GQ), and His-174. Glu-264 serves as a coordination point for Mg(2+). Asn-290 contacts ADP. A Mg(2+)-binding site is contributed by Glu-293. Residues 339–340 (HT), Val-426, and Gly-436 each bind ADP. Residue Asp-437 participates in D-glucose binding. Asp-437 contributes to the Mg(2+) binding site. The active-site Proton acceptor is Asp-437.

Belongs to the ADP-dependent glucokinase family. The cofactor is Mg(2+).

The protein localises to the cytoplasm. The catalysed reaction is D-glucose + ADP = D-glucose 6-phosphate + AMP + H(+). The enzyme catalyses D-glucosamine + ADP = D-glucosamine 6-phosphate + AMP + H(+). Its pathway is carbohydrate degradation; glycolysis. Its function is as follows. Catalyzes the ADP-dependent phosphorylation of D-glucose to D-glucose 6-phosphate and glucosamine to glucosamine 6-phosphate. The chain is ADP-dependent glucose/glucosamine kinase from Pyrococcus abyssi (strain GE5 / Orsay).